Here is a 108-residue protein sequence, read N- to C-terminus: Replication initiation control protein YabA (108 aa).

Residues H82, C84, C98, and C101 each coordinate Zn(2+).

The protein belongs to the YabA family. Homotetramer. Interacts with both DnaA and DnaN, acting as a bridge between these two proteins. Zn(2+) serves as cofactor.

The protein resides in the cytoplasm. The protein localises to the nucleoid. In terms of biological role, involved in control of chromosome replication initiation. Inhibits the cooperative binding of DnaA to the oriC region, thus negatively regulating initiation of chromosome replication. Inhibits the ability of DnaA-ATP to form a helix on DNA; does not disassemble preformed DnaA-DNA helices. Decreases the residence time of DnaA on the chromosome at its binding sites (oriC, replication forks and promoter-binding sites). Tethers DnaA to the replication machinery via the DNA polymerase beta sliding clamp subunit (dnaN). Associates with oriC and other DnaA targets on the chromosome in a DnaA-dependent manner. In Streptococcus agalactiae serotype Ia (strain ATCC 27591 / A909 / CDC SS700), this protein is Replication initiation control protein YabA.